The sequence spans 274 residues: Rhamnulose-1-phosphate aldolase (274 aa).

Residue Glu-117 is part of the active site. Residues His-141, His-143, and His-212 each coordinate Zn(2+).

Belongs to the aldolase class II family. RhaD subfamily. In terms of assembly, homotetramer. It depends on Zn(2+) as a cofactor.

Its subcellular location is the cytoplasm. The enzyme catalyses L-rhamnulose 1-phosphate = (S)-lactaldehyde + dihydroxyacetone phosphate. It participates in carbohydrate degradation; L-rhamnose degradation; glycerone phosphate from L-rhamnose: step 3/3. In terms of biological role, catalyzes the reversible cleavage of L-rhamnulose-1-phosphate to dihydroxyacetone phosphate (DHAP) and L-lactaldehyde. The chain is Rhamnulose-1-phosphate aldolase from Escherichia coli O6:H1 (strain CFT073 / ATCC 700928 / UPEC).